A 308-amino-acid polypeptide reads, in one-letter code: D-alanine--D-alanine ligase (308 aa).

One can recognise an ATP-grasp domain in the interval 105 to 302; it reads KAIFRSLGLA…FPDLCERILD (198 aa). 133–188 contacts ATP; that stretch reads DLPFGLPCVVKPAGEGSSVGVHLVNEAAELGPACRDAASHAGDVIVERYVKGTEVD. 3 residues coordinate Mg(2+): aspartate 256, glutamate 269, and asparagine 271.

This sequence belongs to the D-alanine--D-alanine ligase family. The cofactor is Mg(2+). Mn(2+) is required as a cofactor.

The protein resides in the cytoplasm. It catalyses the reaction 2 D-alanine + ATP = D-alanyl-D-alanine + ADP + phosphate + H(+). It functions in the pathway cell wall biogenesis; peptidoglycan biosynthesis. Cell wall formation. The protein is D-alanine--D-alanine ligase of Anaeromyxobacter dehalogenans (strain 2CP-1 / ATCC BAA-258).